The following is a 434-amino-acid chain: Trigger factor (434 aa).

A PPIase FKBP-type domain is found at 161–246 (EDRVTIDFTG…LKKVEERELP (86 aa)).

This sequence belongs to the FKBP-type PPIase family. Tig subfamily.

It is found in the cytoplasm. The enzyme catalyses [protein]-peptidylproline (omega=180) = [protein]-peptidylproline (omega=0). In terms of biological role, involved in protein export. Acts as a chaperone by maintaining the newly synthesized protein in an open conformation. Functions as a peptidyl-prolyl cis-trans isomerase. This Pectobacterium carotovorum subsp. carotovorum (strain PC1) protein is Trigger factor.